A 286-amino-acid chain; its full sequence is Probable ketoamine kinase YniA (286 aa).

91–93 (DYL) contacts ATP. The active-site Proton acceptor is D193.

It belongs to the fructosamine kinase family.

Its function is as follows. Ketoamine kinase that phosphorylates ketoamines on the third carbon of the sugar moiety to generate ketoamine 3-phosphate. The chain is Probable ketoamine kinase YniA (yniA) from Escherichia coli O157:H7.